The sequence spans 375 residues: Carbamoyl phosphate synthase small chain (375 aa).

Residues Met-1 to Gly-186 are CPSase. L-glutamine is bound by residues Ser-45, Gly-238, and Gly-240. Residues Arg-190 to Cys-375 form the Glutamine amidotransferase type-1 domain. The Nucleophile role is filled by Cys-265. Residues Leu-266, Gln-269, Asn-307, Gly-309, and Phe-310 each coordinate L-glutamine. Residues His-348 and Glu-350 contribute to the active site.

This sequence belongs to the CarA family. Composed of two chains; the small (or glutamine) chain promotes the hydrolysis of glutamine to ammonia, which is used by the large (or ammonia) chain to synthesize carbamoyl phosphate. Tetramer of heterodimers (alpha,beta)4.

It catalyses the reaction hydrogencarbonate + L-glutamine + 2 ATP + H2O = carbamoyl phosphate + L-glutamate + 2 ADP + phosphate + 2 H(+). The catalysed reaction is L-glutamine + H2O = L-glutamate + NH4(+). It participates in amino-acid biosynthesis; L-arginine biosynthesis; carbamoyl phosphate from bicarbonate: step 1/1. It functions in the pathway pyrimidine metabolism; UMP biosynthesis via de novo pathway; (S)-dihydroorotate from bicarbonate: step 1/3. Functionally, small subunit of the glutamine-dependent carbamoyl phosphate synthetase (CPSase). CPSase catalyzes the formation of carbamoyl phosphate from the ammonia moiety of glutamine, carbonate, and phosphate donated by ATP, constituting the first step of 2 biosynthetic pathways, one leading to arginine and/or urea and the other to pyrimidine nucleotides. The small subunit (glutamine amidotransferase) binds and cleaves glutamine to supply the large subunit with the substrate ammonia. The protein is Carbamoyl phosphate synthase small chain of Nitratidesulfovibrio vulgaris (strain ATCC 29579 / DSM 644 / CCUG 34227 / NCIMB 8303 / VKM B-1760 / Hildenborough) (Desulfovibrio vulgaris).